We begin with the raw amino-acid sequence, 355 residues long: Inner membrane protein YghQ (355 aa).

Over 1–37 (MAGFNIKHWFADGAFRTIIRNSAWLGSSNVVSALLGL) the chain is Periplasmic. Residues 38 to 58 (LALSCAGKGMTPAMFGVLVIV) traverse the membrane as a helical segment. Residues 59-100 (QSYAKSISDFIKFQTWQLVVQYGTPALTNNNPQQFRNVVSFS) lie on the Cytoplasmic side of the membrane. A helical transmembrane segment spans residues 101-121 (FSLDIVSGAVAIVGGIALLPF). Topologically, residues 122-134 (LSHSLGLDDQSFW) are periplasmic. The helical transmembrane segment at 135–155 (LAALYCTLIPSMASSTPTGIL) threads the bilayer. The Cytoplasmic portion of the chain corresponds to 156-177 (RAVDRFDLIAVQQATKPFLRAA). The chain crosses the membrane as a helical span at residues 178 to 198 (GSVVAWYFDFGFAGFVIAWYV). Residues 199–261 (SNLVGGTMYW…WSARNSCSTV (63 aa)) are Periplasmic-facing. A helical membrane pass occupies residues 262–282 (LVGIVLGPAAAGLFKIAMTFF). Residues 283-323 (DAAGTPAGLLGKSFYPEVMRLDPRTTRPWLLGVKSGLLAGG) are Cytoplasmic-facing. A helical membrane pass occupies residues 324–344 (IGILVALAVLIVGKPLISLVF). At 345 to 355 (GVKYLEAYDLI) the chain is on the periplasmic side.

The protein resides in the cell inner membrane. The sequence is that of Inner membrane protein YghQ (yghQ) from Escherichia coli (strain K12).